Here is a 432-residue protein sequence, read N- to C-terminus: Enolase (432 aa).

The interval 41–64 (QVPSGASTGSFEAHELRDGDPKRY) is disordered. Residues 52 to 64 (EAHELRDGDPKRY) are compositionally biased toward basic and acidic residues. A (2R)-2-phosphoglycerate-binding site is contributed by Q168. Residue E211 is the Proton donor of the active site. 3 residues coordinate Mg(2+): D248, E289, and D316. 4 residues coordinate (2R)-2-phosphoglycerate: K341, R370, S371, and K392. K341 serves as the catalytic Proton acceptor.

This sequence belongs to the enolase family. It depends on Mg(2+) as a cofactor.

The protein resides in the cytoplasm. It localises to the secreted. Its subcellular location is the cell surface. It catalyses the reaction (2R)-2-phosphoglycerate = phosphoenolpyruvate + H2O. It functions in the pathway carbohydrate degradation; glycolysis; pyruvate from D-glyceraldehyde 3-phosphate: step 4/5. Catalyzes the reversible conversion of 2-phosphoglycerate (2-PG) into phosphoenolpyruvate (PEP). It is essential for the degradation of carbohydrates via glycolysis. The sequence is that of Enolase from Synechocystis sp. (strain ATCC 27184 / PCC 6803 / Kazusa).